We begin with the raw amino-acid sequence, 372 residues long: MTEIDYYELLEISRNSDKSTIKKAYRQMAMKYHPDKNPGDNEAEEKFKAINEAYQVLSDDEKKSIYDRYGKAGLEGHGQRGGGFSGGFDDLGSIFEEMFGFGTSSRSRRERKTYNYNLDVTIEVKLEFNEAVFGCNKEINYKYKTACKPCEGTGAKDGKLSTCPTCKGQGQVHSRQGFMTFAQTCPRCGGTGQATTDSCKSCKGTGYEEVKDNFKVDIPEGVNDGMRIRVSNKGNIAPNGQRGDLYLQVSVKEDSHFVRHDDDIYFEAPIFFTQVALGGTIKVPSLRGELELEIPKGAKDKQQFTFKGEGVKSVQGYGKGDLIIQIKIEYPKALNNEQKELLEKLQDSFGIESKPHETTFEGMFDKVKKWFS.

Positions 5 to 70 constitute a J domain; that stretch reads DYYELLEISR…EKKSIYDRYG (66 aa). The segment at 134–211 adopts a CR-type zinc-finger fold; it reads GCNKEINYKY…CKGTGYEEVK (78 aa). Zn(2+)-binding residues include C147, C150, C163, C166, C185, C188, C199, and C202. CXXCXGXG motif repeat units follow at residues 147-154, 163-170, 185-192, and 199-206; these read CKPCEGTG, CPTCKGQG, CPRCGGTG, and CKSCKGTG.

The protein belongs to the DnaJ family. Homodimer. It depends on Zn(2+) as a cofactor.

It localises to the cytoplasm. Its function is as follows. Participates actively in the response to hyperosmotic and heat shock by preventing the aggregation of stress-denatured proteins and by disaggregating proteins, also in an autonomous, DnaK-independent fashion. Unfolded proteins bind initially to DnaJ; upon interaction with the DnaJ-bound protein, DnaK hydrolyzes its bound ATP, resulting in the formation of a stable complex. GrpE releases ADP from DnaK; ATP binding to DnaK triggers the release of the substrate protein, thus completing the reaction cycle. Several rounds of ATP-dependent interactions between DnaJ, DnaK and GrpE are required for fully efficient folding. Also involved, together with DnaK and GrpE, in the DNA replication of plasmids through activation of initiation proteins. This Aliarcobacter butzleri (strain RM4018) (Arcobacter butzleri) protein is Chaperone protein DnaJ.